A 282-amino-acid polypeptide reads, in one-letter code: uncharacterized protein (282 aa).

The region spanning 4–80 (STLTSKLESL…VDYLSDEKQY (77 aa)) is the HTH rpiR-type domain. The H-T-H motif DNA-binding region spans 40–59 (VAELAQAAGVSSASVIRFTR). Positions 125-265 (IAQKIVEAKR…FFKYLTLTNE (141 aa)) constitute an SIS domain.

This is an uncharacterized protein from Providencia stuartii.